The chain runs to 106 residues: Diptericin A (106 aa).

An N-terminal signal peptide occupies residues 1–19; the sequence is MQFTIAVALLCCAIASTLA. Positions 20–23 are cleaved as a propeptide — removed by a dipeptidylpeptidase; that stretch reads YPMP.

Belongs to the attacin/sarcotoxin-2 family.

The protein resides in the secreted. Its function is as follows. Antimicrobial peptide required to resist Gram-negative bacterial infections, regulated by Dredd. The sequence is that of Diptericin A from Drosophila melanogaster (Fruit fly).